Consider the following 454-residue polypeptide: Cobyrinate a,c-diamide synthase (454 aa).

In terms of domain architecture, GATase cobBQ-type spans 244 to 435 (KIAVAYDSAF…VHIHFLSNIA (192 aa)). The Nucleophile role is filled by C327.

This sequence belongs to the CobB/CbiA family. It depends on Mg(2+) as a cofactor.

It catalyses the reaction cob(II)yrinate + 2 L-glutamine + 2 ATP + 2 H2O = cob(II)yrinate a,c diamide + 2 L-glutamate + 2 ADP + 2 phosphate + 2 H(+). The protein operates within cofactor biosynthesis; adenosylcobalamin biosynthesis; cob(II)yrinate a,c-diamide from sirohydrochlorin (anaerobic route): step 10/10. Functionally, catalyzes the ATP-dependent amidation of the two carboxylate groups at positions a and c of cobyrinate, using either L-glutamine or ammonia as the nitrogen source. This chain is Cobyrinate a,c-diamide synthase, found in Thermoplasma volcanium (strain ATCC 51530 / DSM 4299 / JCM 9571 / NBRC 15438 / GSS1).